We begin with the raw amino-acid sequence, 138 residues long: Large ribosomal subunit protein uL16 (138 aa).

Residues 1 to 17 are compositionally biased toward basic residues; the sequence is MLIPRKVKHRKQHHPKQ. The disordered stretch occupies residues 1 to 24; it reads MLIPRKVKHRKQHHPKQRGIASGG.

Belongs to the universal ribosomal protein uL16 family. Part of the 50S ribosomal subunit.

Its function is as follows. Binds 23S rRNA and is also seen to make contacts with the A and possibly P site tRNAs. This Mycolicibacterium vanbaalenii (strain DSM 7251 / JCM 13017 / BCRC 16820 / KCTC 9966 / NRRL B-24157 / PYR-1) (Mycobacterium vanbaalenii) protein is Large ribosomal subunit protein uL16.